The chain runs to 214 residues: Thymidylate kinase (214 aa).

Position 10 to 17 (10 to 17) interacts with ATP; the sequence is GGEGAGKS.

It belongs to the thymidylate kinase family.

It carries out the reaction dTMP + ATP = dTDP + ADP. Phosphorylation of dTMP to form dTDP in both de novo and salvage pathways of dTTP synthesis. This chain is Thymidylate kinase, found in Brucella abortus (strain S19).